Here is an 821-residue protein sequence, read N- to C-terminus: Glycogen phosphorylase (821 aa).

K667 bears the N6-(pyridoxal phosphate)lysine mark.

The protein belongs to the glycogen phosphorylase family. Pyridoxal 5'-phosphate is required as a cofactor.

The catalysed reaction is [(1-&gt;4)-alpha-D-glucosyl](n) + phosphate = [(1-&gt;4)-alpha-D-glucosyl](n-1) + alpha-D-glucose 1-phosphate. Its function is as follows. Phosphorylase is an important allosteric enzyme in carbohydrate metabolism. Enzymes from different sources differ in their regulatory mechanisms and in their natural substrates. However, all known phosphorylases share catalytic and structural properties. This Haemophilus influenzae (strain ATCC 51907 / DSM 11121 / KW20 / Rd) protein is Glycogen phosphorylase (glgP).